We begin with the raw amino-acid sequence, 453 residues long: Carbamoyl phosphate synthase arginine-specific small chain (453 aa).

Residues 1–28 (MFARVFKAMPARASALTSVNASIQARFM) constitute a mitochondrion transit peptide. Residues 219–406 (HVAVIDCGVK…IDSVKKYKAS (188 aa)) enclose the Glutamine amidotransferase type-1 domain. Residue Cys-295 is the Nucleophile of the active site. Catalysis depends on residues His-379 and Glu-381.

The protein belongs to the CarA family. In terms of assembly, heterodimer composed of 2 chains; the small (or glutamine) chain promotes the hydrolysis of glutamine to ammonia, which is used by the large (or ammonia) chain to synthesize carbamoyl phosphate.

The protein resides in the mitochondrion matrix. It carries out the reaction hydrogencarbonate + L-glutamine + 2 ATP + H2O = carbamoyl phosphate + L-glutamate + 2 ADP + phosphate + 2 H(+). The catalysed reaction is L-glutamine + H2O = L-glutamate + NH4(+). Its pathway is amino-acid biosynthesis; L-arginine biosynthesis; carbamoyl phosphate from bicarbonate: step 1/1. Small subunit of the arginine-specific carbamoyl phosphate synthase (CPSase). CPSase catalyzes the formation of carbamoyl phosphate from the ammonia moiety of glutamine, carbonate, and phosphate donated by ATP, the first step of the arginine biosynthetic pathway. The small subunit (glutamine amidotransferase) binds and cleaves glutamine to supply the large subunit with the substrate ammonia. The chain is Carbamoyl phosphate synthase arginine-specific small chain (cpa1) from Neosartorya fischeri (strain ATCC 1020 / DSM 3700 / CBS 544.65 / FGSC A1164 / JCM 1740 / NRRL 181 / WB 181) (Aspergillus fischerianus).